The chain runs to 390 residues: Tumor susceptibility gene 101 protein (390 aa).

A2 carries the N-acetylalanine modification. Residues 2–145 (AVSESQLKKM…GDEPPVFSRP (144 aa)) enclose the UEV domain. The interval 158 to 162 (PPNTS) is interaction with CEP55. Polar residues predominate over residues 198–214 (ATTSSQYPSQPPVTTVG). Residues 198-220 (ATTSSQYPSQPPVTTVGPSRDGT) are disordered. T220 is modified (phosphothreonine). The stretch at 235–316 (SDKLRWRMKE…NQSENNDIDE (82 aa)) forms a coiled coil. The PTAP motif motif lies at 320–323 (PTAP). Residues 322–390 (APLYKQILNL…RKTAGLSDLY (69 aa)) enclose the SB domain.

This sequence belongs to the ubiquitin-conjugating enzyme family. UEV subfamily. Component of the ESCRT-I complex (endosomal sorting complex required for transport I) which consists of TSG101, VPS28, a VPS37 protein (VPS37A to -D) and MVB12A or MVB12B in a 1:1:1:1 stoichiometry. Interacts with VPS37A, VPS37B and VPS37C. Interacts with DMAP1. Interacts with ubiquitin. Interacts with stathmin, GMCL and AATF. Component of an ESCRT-I complex (endosomal sorting complex required for transport I) which consists of TSG101, VPS28, VPS37A and UBAP1 in a 1:1:1:1 stoichiometry. Interacts with HGS; the interaction mediates the association with the ESCRT-0 complex. Interacts with GGA1 and GGA3. Interacts (via UEV domain) with PDCD6IP/AIP1. Interacts with VPS28, SNF8 and VPS36. Self-associates. Interacts with MVB12A; the association appears to be mediated by the TSG101-VPS37 binary subcomplex. Interacts with VPS37D. Interacts with LRSAM1. Interacts with CEP55; the interaction is required for cytokinesis but not for viral budding. Interacts with PDCD6. Interacts with LITAF. Interacts with MGRN1. Interacts with ARRDC1; recruits TSG101 to the plasma membrane. In terms of assembly, (Microbial infection) Interacts with HIV-1 p6. As to quaternary structure, (Microbial infection) Interacts with human spumavirus Gag. (Microbial infection) Interacts with HTLV-1 Gag. In terms of assembly, (Microbial infection) Interacts with Ebola virus VP40. As to quaternary structure, (Microbial infection) Interacts with EIAV p9; the interaction has been shown in vitro. (Microbial infection) Interacts with Lassa virus protein Z. In terms of assembly, (Microbial infection) Interacts with hepatitis E virus protein ORF3. In terms of processing, monoubiquitinated at multiple sites by LRSAM1 and by MGRN1. Ubiquitination inactivates it, possibly by regulating its shuttling between an active membrane-bound protein and an inactive soluble form. Ubiquitination by MGRN1 requires the presence of UBE2D1. Heart, brain, placenta, lung, liver, skeletal, kidney and pancreas.

The protein resides in the cytoplasm. It localises to the early endosome membrane. The protein localises to the late endosome membrane. Its subcellular location is the cytoskeleton. It is found in the microtubule organizing center. The protein resides in the centrosome. It localises to the midbody. The protein localises to the midbody ring. Its subcellular location is the nucleus. In terms of biological role, component of the ESCRT-I complex, a regulator of vesicular trafficking process. Binds to ubiquitinated cargo proteins and is required for the sorting of endocytic ubiquitinated cargos into multivesicular bodies (MVBs). Mediates the association between the ESCRT-0 and ESCRT-I complex. Required for completion of cytokinesis; the function requires CEP55. May be involved in cell growth and differentiation. Acts as a negative growth regulator. Involved in the budding of many viruses through an interaction with viral proteins that contain a late-budding motif P-[ST]-A-P. This interaction is essential for viral particle budding of numerous retroviruses. Required for the exosomal release of SDCBP, CD63 and syndecan. It may also play a role in the extracellular release of microvesicles that differ from the exosomes. In Homo sapiens (Human), this protein is Tumor susceptibility gene 101 protein (TSG101).